The primary structure comprises 578 residues: Probable multidrug ABC transporter ATP-binding protein YbhF (578 aa).

ABC transporter domains lie at 6–237 and 330–559; these read ITLN…LMTS and IEAK…PDPT. ATP-binding positions include 40–47 and 362–369; these read GPDGAGKT and GPNGAGKS.

Belongs to the ABC transporter superfamily. In terms of assembly, the complex is probably composed of two ATP-binding proteins (YbhF) and two transmembrane proteins (YbhR and YbhS).

Its function is as follows. Part of the ABC transporter complex YbhFSR that could be involved in efflux of cefoperazone. Probably responsible for energy coupling to the transport system. This is Probable multidrug ABC transporter ATP-binding protein YbhF (ybhF) from Escherichia coli (strain K12).